The primary structure comprises 86 residues: RNA-binding protein Hfq (86 aa).

Positions 9–68 (DPYLNTLRKEKVPVSIYLVNGIKLQGQIESFDQFVVLLKNTVSQMVYKHAISTVVPARPV) constitute a Sm domain. The disordered stretch occupies residues 66–86 (RPVRLPSPSDAEHGDSEPGNA). The segment covering 75-86 (DAEHGDSEPGNA) has biased composition (basic and acidic residues).

It belongs to the Hfq family. In terms of assembly, homohexamer.

RNA chaperone that binds small regulatory RNA (sRNAs) and mRNAs to facilitate mRNA translational regulation in response to envelope stress, environmental stress and changes in metabolite concentrations. Also binds with high specificity to tRNAs. This chain is RNA-binding protein Hfq, found in Pseudomonas entomophila (strain L48).